The following is a 231-amino-acid chain: NADH-ubiquinone oxidoreductase chain 4 (231 aa).

6 consecutive transmembrane segments (helical) span residues Pro1–Ile21, Met34–Leu54, Ile63–Gly85, Gly89–Tyr111, Ile118–Leu138, and Leu156–Ser176.

It belongs to the complex I subunit 4 family.

It is found in the mitochondrion membrane. The catalysed reaction is a ubiquinone + NADH + 5 H(+)(in) = a ubiquinol + NAD(+) + 4 H(+)(out). Its function is as follows. Core subunit of the mitochondrial membrane respiratory chain NADH dehydrogenase (Complex I) that is believed to belong to the minimal assembly required for catalysis. Complex I functions in the transfer of electrons from NADH to the respiratory chain. The immediate electron acceptor for the enzyme is believed to be ubiquinone. The polypeptide is NADH-ubiquinone oxidoreductase chain 4 (MT-ND4) (Calloselasma rhodostoma (Malayan pit viper)).